The chain runs to 369 residues: S-adenosylmethionine:tRNA ribosyltransferase-isomerase (369 aa).

Belongs to the QueA family. As to quaternary structure, monomer.

It is found in the cytoplasm. The enzyme catalyses 7-aminomethyl-7-carbaguanosine(34) in tRNA + S-adenosyl-L-methionine = epoxyqueuosine(34) in tRNA + adenine + L-methionine + 2 H(+). Its pathway is tRNA modification; tRNA-queuosine biosynthesis. Transfers and isomerizes the ribose moiety from AdoMet to the 7-aminomethyl group of 7-deazaguanine (preQ1-tRNA) to give epoxyqueuosine (oQ-tRNA). This chain is S-adenosylmethionine:tRNA ribosyltransferase-isomerase, found in Acaryochloris marina (strain MBIC 11017).